Reading from the N-terminus, the 395-residue chain is Probable L-tyrosine/L-aspartate decarboxylase (395 aa).

K242 bears the N6-(pyridoxal phosphate)lysine mark.

The protein belongs to the group II decarboxylase family. MfnA subfamily. Pyridoxal 5'-phosphate serves as cofactor.

It catalyses the reaction L-tyrosine + H(+) = tyramine + CO2. The catalysed reaction is L-aspartate + H(+) = beta-alanine + CO2. It functions in the pathway cofactor biosynthesis; methanofuran biosynthesis. The protein operates within cofactor biosynthesis; coenzyme A biosynthesis. In terms of biological role, catalyzes the decarboxylation of L-tyrosine to produce tyramine for methanofuran biosynthesis. Can also catalyze the decarboxylation of L-aspartate to produce beta-alanine for coenzyme A (CoA) biosynthesis. This chain is Probable L-tyrosine/L-aspartate decarboxylase, found in Methanosarcina barkeri (strain Fusaro / DSM 804).